Consider the following 143-residue polypeptide: Small ribosomal subunit protein uS12 (143 aa).

Positions 1–19 (MGKPKGIRAARKLKTHRQA) are enriched in basic residues. The disordered stretch occupies residues 1–21 (MGKPKGIRAARKLKTHRQAQR). Proline 62 carries the hydroxyproline modification.

Belongs to the universal ribosomal protein uS12 family. In terms of assembly, component of the 40S small ribosomal subunit.

The protein resides in the cytoplasm. The protein localises to the cytosol. It is found in the rough endoplasmic reticulum. The sequence is that of Small ribosomal subunit protein uS12 (rps-23) from Brugia malayi (Filarial nematode worm).